The sequence spans 599 residues: Beta-(1--&gt;2)glucan export ATP-binding/permease protein NdvA (599 aa).

Residues 21–311 enclose the ABC transmembrane type-1 domain; it reads GWILAVANLL…VVNFINNVLM (291 aa). Transmembrane regions (helical) follow at residues 22–42, 68–88, 146–166, 168–188, 254–274, and 276–296; these read WILAVANLLLATAQFAEPILF, LLGAWVGFGLFTIMCSALVAL, EHFAAILSLVVLLPLSLYINW, LAILLFVLCIVFTVLTTLVVH, VITRASTTITVLSIFALGIYL, and QQGLTSVGEIVMFVSFATLLI. The 235-residue stretch at 345-579 folds into the ABC transporter domain; that stretch reads VEFQNVSFSY…GGAFAQLARA (235 aa). 378 to 385 provides a ligand contact to ATP; that stretch reads GATGAGKS.

This sequence belongs to the ABC transporter superfamily. Beta-(1--&gt;2)glucan exporter (TC 3.A.1.108.1) family. Homodimer.

Its subcellular location is the cell inner membrane. The catalysed reaction is [(1-&gt;2)-beta-D-glucosyl](n)(in) + ATP + H2O = [(1-&gt;2)-beta-D-glucosyl](n)(out) + ADP + phosphate + H(+). Functionally, involved in beta-(1--&gt;2)glucan export. Transmembrane domains (TMD) form a pore in the inner membrane and the ATP-binding domain (NBD) is responsible for energy generation. The polypeptide is Beta-(1--&gt;2)glucan export ATP-binding/permease protein NdvA (Rhodopseudomonas palustris (strain ATCC BAA-98 / CGA009)).